An 834-amino-acid polypeptide reads, in one-letter code: Ras GTPase-activating protein 3 (834 aa).

2 consecutive C2 domains span residues Met1–Phe112 and Val123–Tyr263. Ala2 carries the post-translational modification N-acetylalanine. The residue at position 66 (Tyr66) is a Phosphotyrosine. Residue Ser77 is modified to Phosphoserine. Thr110 carries the post-translational modification Phosphothreonine. The Ras-GAP domain maps to Gly346–Ile561. The 102-residue stretch at Ile576–Gln677 folds into the PH domain. The Btk-type zinc finger occupies Asn679–Gly715. Residues His687, Cys698, Cys699, and Cys709 each coordinate Zn(2+). The segment at Lys806–Met834 is disordered. Residues Ser809 and Ser833 each carry the phosphoserine modification. The span at Ser818–Met834 shows a compositional bias: polar residues.

In terms of biological role, inhibitory regulator of the Ras-cyclic AMP pathway. May bind inositol tetrakisphosphate (IP4). This is Ras GTPase-activating protein 3 (RASA3) from Bos taurus (Bovine).